Here is a 376-residue protein sequence, read N- to C-terminus: DNA repair protein RAD51 homolog 3 (376 aa).

The interval 1–126 (MRGKTFRFEM…LMKTTEICGA (126 aa)) is required for Holliday junction resolution activity. The residue at position 20 (S20) is a Phosphoserine. Residues 79–136 (SESHKKCTALELLEQEHTQGFIITFCSALDDILGGGVPLMKTTEICGAPGVGKTQLCM) form an interaction with RAD51B, RAD51D and XRCC3 region. Residue 125-132 (GAPGVGKT) coordinates ATP. The Nuclear localization signal motif lies at 366–370 (RKRSR).

This sequence belongs to the RecA family. RAD51 subfamily. As to quaternary structure, part of the RAD51 paralog protein complexes BCDX2 and CX3; the complexes have a ring-like structure arranged into a flat disc around a central channel. The BCDX2 complex consits of RAD51B, RAD51C, RAD51D and XRCC2; the CX3 complex consists of RAD51C and XRCC3. The BCDX2 subcomplex RAD51B:RAD51C interacts with RAD51. Interacts with SWSAP1; involved in homologous recombination repair. Interacts directly with PALB2 which may serve as a scaffold for a HR complex containing PALB2, BRCA2, RAD51C, RAD51 and XRCC3. Interacts with HELQ. Interacts with DNA damage up-regulated protein DDUP. In terms of tissue distribution, expressed in a variety of tissues, with highest expression in testis, heart muscle, spleen and prostate.

It localises to the nucleus. Its subcellular location is the cytoplasm. The protein localises to the perinuclear region. The protein resides in the mitochondrion. Functionally, essential for the homologous recombination (HR) pathway of DNA repair. Involved in the homologous recombination repair (HRR) pathway of double-stranded DNA breaks arising during DNA replication or induced by DNA-damaging agents. Part of the RAD51 paralog protein complexes BCDX2 and CX3 which act at different stages of the BRCA1-BRCA2-dependent HR pathway. Upon DNA damage, BCDX2 seems to act downstream of BRCA2 recruitment and upstream of RAD51 recruitment; CX3 seems to act downstream of RAD51 recruitment; both complexes bind predominantly to the intersection of the four duplex arms of the Holliday junction (HJ) and to junction of replication forks. The BCDX2 complex was originally reported to bind single-stranded DNA, single-stranded gaps in duplex DNA and specifically to nicks in duplex DNA. The BCDX2 subcomplex RAD51B:RAD51C exhibits single-stranded DNA-dependent ATPase activity suggesting an involvement in early stages of the HR pathway. Involved in RAD51 foci formation in response to DNA damage suggesting an involvement in early stages of HR probably in the invasion step. Has an early function in DNA repair in facilitating phosphorylation of the checkpoint kinase CHEK2 and thereby transduction of the damage signal, leading to cell cycle arrest and HR activation. Participates in branch migration and HJ resolution and thus is important for processing HR intermediates late in the DNA repair process; the function may be linked to the CX3 complex. Part of a PALB2-scaffolded HR complex containing BRCA2 and which is thought to play a role in DNA repair by HR. Protects RAD51 from ubiquitin-mediated degradation that is enhanced following DNA damage. Plays a role in regulating mitochondrial DNA copy number under conditions of oxidative stress in the presence of RAD51 and XRCC3. Contributes to DNA cross-link resistance, sister chromatid cohesion and genomic stability. Involved in maintaining centrosome number in mitosis. This Homo sapiens (Human) protein is DNA repair protein RAD51 homolog 3 (RAD51C).